The chain runs to 582 residues: 2-succinyl-5-enolpyruvyl-6-hydroxy-3-cyclohexene-1-carboxylate synthase (582 aa).

It belongs to the TPP enzyme family. MenD subfamily. In terms of assembly, homodimer. Mg(2+) is required as a cofactor. It depends on Mn(2+) as a cofactor. Requires thiamine diphosphate as cofactor.

The catalysed reaction is isochorismate + 2-oxoglutarate + H(+) = 5-enolpyruvoyl-6-hydroxy-2-succinyl-cyclohex-3-ene-1-carboxylate + CO2. It participates in quinol/quinone metabolism; 1,4-dihydroxy-2-naphthoate biosynthesis; 1,4-dihydroxy-2-naphthoate from chorismate: step 2/7. The protein operates within quinol/quinone metabolism; menaquinone biosynthesis. Its function is as follows. Catalyzes the thiamine diphosphate-dependent decarboxylation of 2-oxoglutarate and the subsequent addition of the resulting succinic semialdehyde-thiamine pyrophosphate anion to isochorismate to yield 2-succinyl-5-enolpyruvyl-6-hydroxy-3-cyclohexene-1-carboxylate (SEPHCHC). In Chlorobaculum tepidum (strain ATCC 49652 / DSM 12025 / NBRC 103806 / TLS) (Chlorobium tepidum), this protein is 2-succinyl-5-enolpyruvyl-6-hydroxy-3-cyclohexene-1-carboxylate synthase.